The primary structure comprises 152 residues: Protein IpgF (152 aa).

An N-terminal signal peptide occupies residues 1–17 (MSRFVFILLCFIPYLGR).

It belongs to the IagB/IpgF/P19 family.

The chain is Protein IpgF (ipgF) from Shigella sonnei.